The following is a 147-amino-acid chain: D-aminoacyl-tRNA deacylase (147 aa).

Residues 136-137 (GP) carry the Gly-cisPro motif, important for rejection of L-amino acids motif.

The protein belongs to the DTD family. Homodimer.

The protein resides in the cytoplasm. The catalysed reaction is glycyl-tRNA(Ala) + H2O = tRNA(Ala) + glycine + H(+). It catalyses the reaction a D-aminoacyl-tRNA + H2O = a tRNA + a D-alpha-amino acid + H(+). In terms of biological role, an aminoacyl-tRNA editing enzyme that deacylates mischarged D-aminoacyl-tRNAs. Also deacylates mischarged glycyl-tRNA(Ala), protecting cells against glycine mischarging by AlaRS. Acts via tRNA-based rather than protein-based catalysis; rejects L-amino acids rather than detecting D-amino acids in the active site. By recycling D-aminoacyl-tRNA to D-amino acids and free tRNA molecules, this enzyme counteracts the toxicity associated with the formation of D-aminoacyl-tRNA entities in vivo and helps enforce protein L-homochirality. This Streptococcus pneumoniae (strain Taiwan19F-14) protein is D-aminoacyl-tRNA deacylase.